The following is a 521-amino-acid chain: Medium/long-chain-fatty-acid--[acyl-carrier-protein] ligase MbtM (521 aa).

A disordered region spans residues 146–172; that stretch reads RRCPEPPAPHANPAILQGTAGSTGTPK.

It belongs to the ATP-dependent AMP-binding enzyme family.

The catalysed reaction is a long-chain fatty acid + holo-[ACP] + ATP = a long-chain fatty acyl-[ACP] + AMP + diphosphate. It carries out the reaction a medium-chain fatty acid + holo-[ACP] + ATP = a medium-chain fatty acyl-[ACP] + AMP + diphosphate. Its pathway is siderophore biosynthesis; mycobactin biosynthesis. Activates lipidic moieties required for mycobactin biosynthesis. Converts medium- to long-chain aliphatic fatty acids into acyl adenylate, which is further transferred on to the phosphopantetheine arm of the carrier protein MbtL. The polypeptide is Medium/long-chain-fatty-acid--[acyl-carrier-protein] ligase MbtM (mbtM) (Mycolicibacterium paratuberculosis (strain ATCC BAA-968 / K-10) (Mycobacterium paratuberculosis)).